A 233-amino-acid chain; its full sequence is Putative cobalt transport protein CbiM (233 aa).

The next 6 helical transmembrane spans lie at 9-29, 43-63, 75-95, 107-127, 138-158, and 177-197; these read PPMW…YGIV, PLVA…MPSV, LGAV…VLLF, TLGA…VIVY, TVGI…TTAV, and IVIY…LTVI.

Belongs to the CbiM family. In terms of assembly, forms an energy-coupling factor (ECF) transporter complex composed of an ATP-binding protein (A component, CbiO), a transmembrane protein (T component, CbiQ) and 2 possible substrate-capture proteins (S components, CbiM and CbiN) of unknown stoichimetry.

Its subcellular location is the cell membrane. Its pathway is cofactor biosynthesis; adenosylcobalamin biosynthesis. Part of the energy-coupling factor (ECF) transporter complex CbiMNOQ involved in cobalt import. The chain is Putative cobalt transport protein CbiM from Methanocaldococcus jannaschii (strain ATCC 43067 / DSM 2661 / JAL-1 / JCM 10045 / NBRC 100440) (Methanococcus jannaschii).